Here is a 227-residue protein sequence, read N- to C-terminus: MEQPAPQPAYVLHSRAYKETSALVDFLTPQGRVRAVLRRARGKGGSLVRPFVPLEVELRGRGELKNVGRLDSTGIAAWLHGDALFSGLYLNELLMRLLPAEAPYPALFEHYTLTLQALAAGRPLEPLLRSFEWRLLDELGYAFSLSQDVNDAAVVADGLYRLRVDAGLERVELFQPGLFKGSELLALAEADWDAPGALLAAKRLMRQALAVHLGTKPLVSRELFRKR.

This sequence belongs to the RecO family.

In terms of biological role, involved in DNA repair and RecF pathway recombination. This is DNA repair protein RecO from Pseudomonas entomophila (strain L48).